We begin with the raw amino-acid sequence, 299 residues long: Homeobox protein ceh-24 (299 aa).

Residues 1-35 (MSEKETPSPVLDVKKEKNEETGIDEEKSSEDDCSK) are compositionally biased toward basic and acidic residues. 2 disordered regions span residues 1–45 (MSEK…NPSK) and 208–263 (QEKE…SGVF). The homeobox DNA-binding region spans 150-209 (RRKRRVLFSQAQVYELERRFKQAKYLTAPEREQLANSIRLTPTQVKIWFQNHRYKCKRQE). Residues 242-252 (DDKDDEEEEES) show a composition bias toward acidic residues.

This sequence belongs to the NK-2 homeobox family. In terms of tissue distribution, expressed in the 8 vulval muscles, 8-10 ventral neurons in the head and in the most posterior pharyngeal muscle cell, m8. Expressed in SIA, SIB and SMB sublateral motor neurons, and in muscles of the pharynx and vulva.

The protein resides in the nucleus. Functionally, probable transcriptional regulator that is required in neural development for the normal formation of sublateral cholinergic motor neuron processes. Plays a role in regulating the expression of acetylcholine transporter protein unc-17 in the sublateral processes. In particular, it is required in sublateral motor neurons for a left-right turning behavior that occurs during the lethargus phase of the normal sleep process called 'flipping'. During 'flipping' animals rotate 180 degrees about their longitudinal axis. The protein is Homeobox protein ceh-24 of Caenorhabditis elegans.